We begin with the raw amino-acid sequence, 1449 residues long: VWFA and cache domain-containing protein CG16868 (1449 aa).

The first 23 residues, 1-23 (MWPNSNLNAVLLILAVLACPTSS), serve as a signal peptide directing secretion. Over 24–1220 (QHVPLAMANS…NPQREQHAYS (1197 aa)) the chain is Extracellular. N-linked (GlcNAc...) asparagine glycosylation is found at N32, N112, N153, N407, N447, and N497. Positions 320–541 (FVLFLIDVGS…TSLPQTSSRI (222 aa)) constitute a VWFA domain. Residues 557–639 (VHPPVVDADS…PRPLIQRETS (83 aa)) form the Cache 1 domain. N-linked (GlcNAc...) asparagine glycans are attached at residues N649, N668, and N707. One can recognise a Cache 2 domain in the interval 889-934 (TAPYLDAGGAGYIITIAHTIFEGKAHALHSAQQDRPVAVVALDVPY). N-linked (GlcNAc...) asparagine glycans are attached at residues N1015, N1025, N1059, and N1111. Residues 1221 to 1241 (AFGPLGGAIVVLVMVIGFAIY) form a helical membrane-spanning segment. The Cytoplasmic portion of the chain corresponds to 1242 to 1449 (CYRHNLDAQT…VHRHMETAES (208 aa)). Disordered regions lie at residues 1307–1339 (YHVS…SSDQ) and 1352–1416 (DKRH…GGSV). A compositionally biased stretch (low complexity) spans 1359–1369 (DTMSISTSISS). Over residues 1370–1392 (PTNRQQSSSQPNTHPYLSNQPTS) the composition is skewed to polar residues.

The protein belongs to the calcium channel subunit alpha-2/delta family.

It is found in the membrane. The polypeptide is VWFA and cache domain-containing protein CG16868 (Drosophila melanogaster (Fruit fly)).